Here is a 181-residue protein sequence, read N- to C-terminus: Ribosome maturation factor RimM (181 aa).

One can recognise a PRC barrel domain in the interval 98-172 (EDEFYFEDLI…RIVIPELSLW (75 aa)).

It belongs to the RimM family. Binds ribosomal protein uS19.

It localises to the cytoplasm. Functionally, an accessory protein needed during the final step in the assembly of 30S ribosomal subunit, possibly for assembly of the head region. Essential for efficient processing of 16S rRNA. May be needed both before and after RbfA during the maturation of 16S rRNA. It has affinity for free ribosomal 30S subunits but not for 70S ribosomes. This chain is Ribosome maturation factor RimM, found in Hyphomonas neptunium (strain ATCC 15444).